A 277-amino-acid chain; its full sequence is Phosphonoacetaldehyde hydrolase (277 aa).

D20 functions as the Nucleophile in the catalytic mechanism. Residues D20 and A22 each contribute to the Mg(2+) site. Residue K61 is the Schiff-base intermediate with substrate of the active site. D194 provides a ligand contact to Mg(2+).

The protein belongs to the HAD-like hydrolase superfamily. PhnX family. In terms of assembly, homodimer. The cofactor is Mg(2+).

The catalysed reaction is phosphonoacetaldehyde + H2O = acetaldehyde + phosphate + H(+). In terms of biological role, involved in phosphonate degradation. The sequence is that of Phosphonoacetaldehyde hydrolase from Syntrophobacter fumaroxidans (strain DSM 10017 / MPOB).